Here is a 253-residue protein sequence, read N- to C-terminus: Trypsin beta (253 aa).

Positions 1–22 (MLKFVILLSAVACALGGTIPEG) are cleaved as a signal peptide. The propeptide at 23 to 30 (LLPQLDGR) is activation peptide. Positions 31 to 253 (IVGGTATTIS…DLRSWVINNA (223 aa)) constitute a Peptidase S1 domain. Cysteine 56 and cysteine 72 are disulfide-bonded. Catalysis depends on charge relay system residues histidine 71 and aspartate 116. 2 disulfides stabilise this stretch: cysteine 180-cysteine 197 and cysteine 206-cysteine 230. The Charge relay system role is filled by serine 210.

Belongs to the peptidase S1 family.

The protein localises to the secreted. The protein resides in the extracellular space. The enzyme catalyses Preferential cleavage: Arg-|-Xaa, Lys-|-Xaa.. The sequence is that of Trypsin beta (betaTry) from Drosophila erecta (Fruit fly).